Consider the following 326-residue polypeptide: Undecaprenyl-phosphate 4-deoxy-4-formamido-L-arabinose transferase (326 aa).

Residues 1–235 lie on the Cytoplasmic side of the membrane; the sequence is MFEIHPIKKV…TCLTTTPLRM (235 aa). Residues 236–256 traverse the membrane as a helical segment; it reads LSLLGSIIATSGFSLAILLVV. Residues 257–269 lie on the Periplasmic side of the membrane; that stretch reads LRLAFGSQWSGEG. Residues 270 to 290 traverse the membrane as a helical segment; it reads VFMLFAVLFTFIGAQFIGMGL. Topologically, residues 291 to 326 are cytoplasmic; sequence LGEYIGRIYNDVRARPRYFVQKVIRPASSIDIEENH.

The protein belongs to the glycosyltransferase 2 family.

It is found in the cell inner membrane. It catalyses the reaction UDP-4-deoxy-4-formamido-beta-L-arabinose + di-trans,octa-cis-undecaprenyl phosphate = 4-deoxy-4-formamido-alpha-L-arabinopyranosyl di-trans,octa-cis-undecaprenyl phosphate + UDP. It participates in glycolipid biosynthesis; 4-amino-4-deoxy-alpha-L-arabinose undecaprenyl phosphate biosynthesis; 4-amino-4-deoxy-alpha-L-arabinose undecaprenyl phosphate from UDP-4-deoxy-4-formamido-beta-L-arabinose and undecaprenyl phosphate: step 1/2. It functions in the pathway bacterial outer membrane biogenesis; lipopolysaccharide biosynthesis. In terms of biological role, catalyzes the transfer of 4-deoxy-4-formamido-L-arabinose from UDP to undecaprenyl phosphate. The modified arabinose is attached to lipid A and is required for resistance to polymyxin and cationic antimicrobial peptides. The chain is Undecaprenyl-phosphate 4-deoxy-4-formamido-L-arabinose transferase from Escherichia fergusonii (strain ATCC 35469 / DSM 13698 / CCUG 18766 / IAM 14443 / JCM 21226 / LMG 7866 / NBRC 102419 / NCTC 12128 / CDC 0568-73).